A 93-amino-acid chain; its full sequence is U12-lycotoxin-Ls1a (93 aa).

The signal sequence occupies residues 1 to 18 (MKFAVILLFSLVVLTVAS). The propeptide occupies 19 to 38 (ESVEEVRREIDIEDLPEQQR).

The protein belongs to the neurotoxin 31 family. Contains 5 disulfide bonds. Expressed by the venom gland.

It localises to the secreted. This Lycosa singoriensis (Wolf spider) protein is U12-lycotoxin-Ls1a.